Here is a 128-residue protein sequence, read N- to C-terminus: Nanos homolog 1 (128 aa).

The interval 7–23 (FDSWSDYLGLSSLISRG) is essential for its translational repressor activity. The segment at 23 to 56 (GLQPRGEGENPSPRWNVSCPAPAEPLPSKEPEGR) is disordered. Residues 60 to 114 (GCGFCRSNKEAMSLYSSHRLRSLDGRVLCPVLRGYTCPLCGANGDWAHTMRYCPL) form a Nanos-type zinc finger. Positions 61, 64, 77, 88, 96, 99, 107, and 112 each coordinate Zn(2+). 2 consecutive short sequence motifs (C2HC) follow at residues 61–88 (CGFC…RVLC) and 96–112 (CPLC…MRYC).

Belongs to the nanos family. Interacts with ccnb1.

The protein localises to the cytoplasm. It is found in the perinuclear region. Functionally, acts as a translational repressor. Can mediate repression affecting different steps in the translation process: cap-driven, IRES-driven, polyadenylated RNAs or nonpolyadenylated RNAs. Essential for the development of primordial germ cells (PGCs) by ensuring their proper migration and survival. This chain is Nanos homolog 1 (nanos1), found in Xenopus borealis (Kenyan clawed frog).